The chain runs to 576 residues: RING finger and SPRY domain-containing protein 1 (576 aa).

A signal peptide spans methionine 1–glycine 16. Serine 50 carries the phosphoserine modification. The segment at serine 50–asparagine 99 is disordered. The segment covering aspartate 57–valine 68 has biased composition (polar residues). The segment covering proline 83–lysine 97 has biased composition (basic residues). Residues leucine 300–phenylalanine 483 enclose the B30.2/SPRY domain. A glycan (N-linked (GlcNAc...) asparagine) is linked at asparagine 314. The RING-type zinc finger occupies cysteine 527–arginine 562.

It is found in the secreted. The chain is RING finger and SPRY domain-containing protein 1 (RSPRY1) from Pongo abelii (Sumatran orangutan).